A 331-amino-acid chain; its full sequence is tRNA U34 carboxymethyltransferase (331 aa).

Residues lysine 91, tryptophan 105, lysine 110, glycine 130, 152 to 154 (DPS), 181 to 182 (IE), methionine 196, tyrosine 200, and arginine 315 each bind carboxy-S-adenosyl-L-methionine.

This sequence belongs to the class I-like SAM-binding methyltransferase superfamily. CmoB family. As to quaternary structure, homotetramer.

The catalysed reaction is carboxy-S-adenosyl-L-methionine + 5-hydroxyuridine(34) in tRNA = 5-carboxymethoxyuridine(34) in tRNA + S-adenosyl-L-homocysteine + H(+). Catalyzes carboxymethyl transfer from carboxy-S-adenosyl-L-methionine (Cx-SAM) to 5-hydroxyuridine (ho5U) to form 5-carboxymethoxyuridine (cmo5U) at position 34 in tRNAs. This Shewanella baltica (strain OS185) protein is tRNA U34 carboxymethyltransferase.